Consider the following 370-residue polypeptide: DNA replication and repair protein RecF (370 aa).

Position 30-37 (30-37 (GPNGSGKT)) interacts with ATP.

This sequence belongs to the RecF family.

Its subcellular location is the cytoplasm. In terms of biological role, the RecF protein is involved in DNA metabolism; it is required for DNA replication and normal SOS inducibility. RecF binds preferentially to single-stranded, linear DNA. It also seems to bind ATP. The protein is DNA replication and repair protein RecF of Prosthecochloris aestuarii (strain DSM 271 / SK 413).